A 178-amino-acid polypeptide reads, in one-letter code: MAILKWKYSRYNSSTELSTAEIATQLHAYNTTETHTKACSVGTTETQKTNHKRLRGGTELPYNPTKRVRLSAVDSVDRGVYSTSDCTNKDRCGSCSTTTPIVHLKGDANTLKCLRYRLGKYKALYQDASSTWRWTCTNDKKQIAIVTLTYTTEYQRDKFLTTVKIPNTVTVSKGYMSI.

The segment at 40-60 (SVGTTETQKTNHKRLRGGTEL) is disordered.

It belongs to the papillomaviridae E8^E2C protein family.

The protein localises to the host nucleus. In terms of biological role, plays a role in limiting the replication of viral DNA in keratinocytes. Recruits the host NCoR/SMRT complex to viral replication foci to mediate repression of both viral replication and transcription. The chain is Protein E8^E2C from Homo sapiens (Human).